Reading from the N-terminus, the 619-residue chain is Chaperone protein HscA homolog (619 aa).

It belongs to the heat shock protein 70 family.

Its function is as follows. Chaperone involved in the maturation of iron-sulfur cluster-containing proteins. Has a low intrinsic ATPase activity which is markedly stimulated by HscB. In Methylococcus capsulatus (strain ATCC 33009 / NCIMB 11132 / Bath), this protein is Chaperone protein HscA homolog.